The following is a 214-amino-acid chain: DELTA-actitoxin-Aeq1a (214 aa).

Residues 1–19 form the signal peptide; sequence MSRLIIVFIVVTMICSATA. The propeptide occupies 20-35; it reads LPSKKIIDEDEEDEKR. The plays an important role in the hemolytic activity stretch occupies residues 38 to 47; the sequence is DVAGAVIDGA. Residues 46–65 are N-terminal region; that stretch reads GASLSFDILKTVLEALGNVK. Residues Ser-89, Val-122, Ser-140, Pro-142, Tyr-168, Tyr-172, and Tyr-173 each contribute to the phosphocholine site. Residues 140-155 are trp-rich region, which is important for the binding to lipid membrane; the sequence is SVPYDYNWYSNWWNVR. The short motif at 179–181 is the Cell attachment site, crucial for protein stability element; that stretch reads RGD.

The protein belongs to the actinoporin family. Sea anemone subfamily. In terms of assembly, octamer or nonamer in membranes. Monomer in the soluble state.

The protein resides in the secreted. Its subcellular location is the nematocyst. The protein localises to the target cell membrane. In terms of biological role, pore-forming protein that forms cations-selective hydrophilic pores of around 1 nm and causes cardiac stimulation and cytolysis. Pore formation is a multi-step process that involves specific recognition of membrane sphingomyelin (but neither cholesterol nor phosphatidylcholine) using aromatic rich region and adjacent phosphocholine (POC) binding site, firm binding to the membrane (mainly driven by hydrophobic interactions) accompanied by the transfer of the N-terminal region to the lipid-water interface and finally pore formation after oligomerization of monomers. Cytolytic effects include red blood cells hemolysis, platelet aggregation and lysis, cytotoxic and cytostatic effects on fibroblasts. Lethality in mammals has been ascribed to severe vasospasm of coronary vessels, cardiac arrhythmia, and inotropic effects. This Actinia equina (Beadlet anemone) protein is DELTA-actitoxin-Aeq1a.